The chain runs to 172 residues: Myosin regulatory light polypeptide 9 (172 aa).

Residues 1 to 16 (MSSKRAKAKTTKKRPQ) are compositionally biased toward basic residues. Residues 1–20 (MSSKRAKAKTTKKRPQRATS) are disordered. At Ser2 the chain carries N-acetylserine. A Phosphothreonine; by MLCK, CIT and ROCK2 modification is found at Thr19. Ser20 carries the phosphoserine; by CDC42BP, CIT, MLCK, PAK1, ROCK1, ROCK2, DAPK1, DAPK2 and ZIPK/DAPK3 modification. 3 consecutive EF-hand domains span residues 29-64 (SQIQ…LGKN), 98-133 (DPED…MGDR), and 134-169 (FTDE…GAKD). The Ca(2+) site is built by Asp42, Asn44, Asp46, and Asp53.

As to quaternary structure, myosin is a hexamer of 2 heavy chains and 4 light chains: interacts with myosin heavy chain MYO19. Interacts with LUZP1; the interaction results in inhibition of phosphorylation of MYL9 by DAPK3. Post-translationally, phosphorylation increases the actin-activated myosin ATPase activity and thereby regulates the contractile activity. It is required to generate the driving force in the migration of the cells but not necessary for localization of myosin-2 at the leading edge. Phosphorylation is required for myotube formation. Phosphorylated by DAPK3; DAPK3-mediated phosphorylation is inhibited by LUZP1.

The protein resides in the cytoplasm. It localises to the cytoskeleton. Its subcellular location is the cell cortex. Its function is as follows. Myosin regulatory subunit that plays an important role in regulation of both smooth muscle and nonmuscle cell contractile activity via its phosphorylation. Implicated in cytokinesis, receptor capping, and cell locomotion. In myoblasts, regulates PIEZO1-dependent cortical actomyosin assembly involved in myotube formation. The polypeptide is Myosin regulatory light polypeptide 9 (Myl9) (Mus musculus (Mouse)).